Here is a 431-residue protein sequence, read N- to C-terminus: Glutamate-1-semialdehyde 2,1-aminomutase (431 aa).

The residue at position 265 (Lys-265) is an N6-(pyridoxal phosphate)lysine.

It belongs to the class-III pyridoxal-phosphate-dependent aminotransferase family. HemL subfamily. In terms of assembly, homodimer. Requires pyridoxal 5'-phosphate as cofactor.

The protein localises to the cytoplasm. The catalysed reaction is (S)-4-amino-5-oxopentanoate = 5-aminolevulinate. It participates in porphyrin-containing compound metabolism; protoporphyrin-IX biosynthesis; 5-aminolevulinate from L-glutamyl-tRNA(Glu): step 2/2. The polypeptide is Glutamate-1-semialdehyde 2,1-aminomutase (Aliivibrio fischeri (strain MJ11) (Vibrio fischeri)).